Here is a 136-residue protein sequence, read N- to C-terminus: Ribonuclease P protein component (136 aa).

Belongs to the RnpA family. As to quaternary structure, consists of a catalytic RNA component (M1 or rnpB) and a protein subunit.

The catalysed reaction is Endonucleolytic cleavage of RNA, removing 5'-extranucleotides from tRNA precursor.. In terms of biological role, RNaseP catalyzes the removal of the 5'-leader sequence from pre-tRNA to produce the mature 5'-terminus. It can also cleave other RNA substrates such as 4.5S RNA. The protein component plays an auxiliary but essential role in vivo by binding to the 5'-leader sequence and broadening the substrate specificity of the ribozyme. This chain is Ribonuclease P protein component, found in Burkholderia pseudomallei (strain 1106a).